The chain runs to 196 residues: Ribonuclease HII (196 aa).

Positions 13-196 (LLVAGVDEAG…SFSPLKKKLF (184 aa)) constitute an RNase H type-2 domain. The a divalent metal cation site is built by D19, E20, and D111.

Belongs to the RNase HII family. Mn(2+) is required as a cofactor. The cofactor is Mg(2+).

The protein localises to the cytoplasm. The enzyme catalyses Endonucleolytic cleavage to 5'-phosphomonoester.. Its function is as follows. Endonuclease that specifically degrades the RNA of RNA-DNA hybrids. The sequence is that of Ribonuclease HII (rnhB) from Aquifex aeolicus (strain VF5).